A 245-amino-acid chain; its full sequence is tRNA (guanine-N(1)-)-methyltransferase (245 aa).

S-adenosyl-L-methionine is bound by residues glycine 114 and 134-139; that span reads IGDYIL.

Belongs to the RNA methyltransferase TrmD family. Homodimer.

The protein resides in the cytoplasm. It catalyses the reaction guanosine(37) in tRNA + S-adenosyl-L-methionine = N(1)-methylguanosine(37) in tRNA + S-adenosyl-L-homocysteine + H(+). Functionally, specifically methylates guanosine-37 in various tRNAs. This chain is tRNA (guanine-N(1)-)-methyltransferase, found in Listeria monocytogenes serotype 4b (strain CLIP80459).